We begin with the raw amino-acid sequence, 288 residues long: 4-diphosphocytidyl-2-C-methyl-D-erythritol kinase (288 aa).

Lys-8 is a catalytic residue. An ATP-binding site is contributed by 90-100; that stretch reads PVGAGLAGGSS. The active site involves Asp-132.

This sequence belongs to the GHMP kinase family. IspE subfamily.

It carries out the reaction 4-CDP-2-C-methyl-D-erythritol + ATP = 4-CDP-2-C-methyl-D-erythritol 2-phosphate + ADP + H(+). Its pathway is isoprenoid biosynthesis; isopentenyl diphosphate biosynthesis via DXP pathway; isopentenyl diphosphate from 1-deoxy-D-xylulose 5-phosphate: step 3/6. In terms of biological role, catalyzes the phosphorylation of the position 2 hydroxy group of 4-diphosphocytidyl-2C-methyl-D-erythritol. This Chlamydia trachomatis serovar A (strain ATCC VR-571B / DSM 19440 / HAR-13) protein is 4-diphosphocytidyl-2-C-methyl-D-erythritol kinase.